The sequence spans 360 residues: Biotin synthase 2 (360 aa).

The Radical SAM core domain occupies 53-280; that stretch reads RRVKLNFLVN…TAEVRLSGGR (228 aa). [4Fe-4S] cluster is bound by residues Cys-68, Cys-72, and Cys-75. Residues Cys-112, Cys-145, Cys-205, and Arg-275 each coordinate [2Fe-2S] cluster.

Belongs to the radical SAM superfamily. Biotin synthase family. In terms of assembly, homodimer. The cofactor is [4Fe-4S] cluster. [2Fe-2S] cluster is required as a cofactor.

It catalyses the reaction (4R,5S)-dethiobiotin + (sulfur carrier)-SH + 2 reduced [2Fe-2S]-[ferredoxin] + 2 S-adenosyl-L-methionine = (sulfur carrier)-H + biotin + 2 5'-deoxyadenosine + 2 L-methionine + 2 oxidized [2Fe-2S]-[ferredoxin]. Its pathway is cofactor biosynthesis; biotin biosynthesis; biotin from 7,8-diaminononanoate: step 2/2. Catalyzes the conversion of dethiobiotin (DTB) to biotin by the insertion of a sulfur atom into dethiobiotin via a radical-based mechanism. This Frankia casuarinae (strain DSM 45818 / CECT 9043 / HFP020203 / CcI3) protein is Biotin synthase 2.